The following is a 488-amino-acid chain: Serine protease HTR4 (488 aa).

The signal sequence occupies residues 1–35 (MSRSKMSSQRLWAVRAQFLLLWLLLWAAPVPWAEA). The 79-residue stretch at 40-118 (VSLPCPDACD…RAWLGTCGCA (79 aa)) folds into the IGFBP N-terminal domain. 6 cysteine pairs are disulfide-bonded: Cys-44–Cys-70, Cys-48–Cys-72, Cys-53–Cys-73, Cys-59–Cys-76, Cys-84–Cys-98, and Cys-92–Cys-115. The serine protease stretch occupies residues 213 to 373 (GSGFIVSEDG…IPSDRIRQFL (161 aa)). Catalysis depends on charge relay system residues His-229, Asp-259, and Ser-337. The region spanning 384-476 (KAPLQKKYLG…LSIIVLRGSQ (93 aa)) is the PDZ domain.

It belongs to the peptidase S1C family.

Its subcellular location is the secreted. Functionally, serine protease. In Rattus norvegicus (Rat), this protein is Serine protease HTR4 (Htra4).